The following is a 68-amino-acid chain: Protein SlyX homolog (68 aa).

It belongs to the SlyX family.

The polypeptide is Protein SlyX homolog (Pseudomonas putida (strain GB-1)).